A 391-amino-acid polypeptide reads, in one-letter code: Casein kinase II subunit alpha (391 aa).

The interaction with beta subunit stretch occupies residues 36 to 41 (QDDYQL). One can recognise a Protein kinase domain in the interval 39–324 (YQLVRKLGRG…AREAMEHPYF (286 aa)). ATP contacts are provided by residues 45–53 (LGRGKYSEV) and lysine 68. Aspartate 156 functions as the Proton acceptor in the catalytic mechanism. Threonine 344 and threonine 360 each carry phosphothreonine; by CDK1. 2 positions are modified to phosphoserine; by CDK1: serine 362 and serine 370.

It belongs to the protein kinase superfamily. Ser/Thr protein kinase family. CK2 subfamily. As to quaternary structure, heterotetramer composed of two catalytic subunits (alpha chain and/or alpha' chain) and two regulatory subunits (beta chains). The tetramer can exist as a combination of 2 alpha/2 beta, 2 alpha'/2 beta or 1 alpha/1 alpha'/2 beta subunits. Also part of a CK2-SPT16-SSRP1 complex composed of SSRP1, SUPT16H, CSNK2A1, CSNK2A2 and CSNK2B, which forms following UV irradiation. Interacts with RNPS1. Interacts with SNAI1. Interacts with PML. Interacts with CCAR2. Interacts with HIRIP3. In terms of processing, phosphorylated at Thr-344, Thr-360, Ser-362 and Ser-370 by CDK1 in prophase and metaphase and dephosphorylated during anaphase. Phosphorylation does not directly affect casein kinase 2 activity, but may contribute to its regulation by forming binding sites for interacting proteins and/or targeting it to different compartments.

Its subcellular location is the nucleus. The catalysed reaction is L-seryl-[protein] + ATP = O-phospho-L-seryl-[protein] + ADP + H(+). It catalyses the reaction L-threonyl-[protein] + ATP = O-phospho-L-threonyl-[protein] + ADP + H(+). With respect to regulation, constitutively active protein kinase whose activity is not directly affected by phosphorylation. Seems to be regulated by level of expression and localization. Its function is as follows. Catalytic subunit of a constitutively active serine/threonine-protein kinase complex that phosphorylates a large number of substrates containing acidic residues C-terminal to the phosphorylated serine or threonine. Regulates numerous cellular processes, such as cell cycle progression, apoptosis and transcription, as well as viral infection. May act as a regulatory node which integrates and coordinates numerous signals leading to an appropriate cellular response. During mitosis, functions as a component of the p53/TP53-dependent spindle assembly checkpoint (SAC) that maintains cyclin-B-CDK1 activity and G2 arrest in response to spindle damage. Also required for p53/TP53-mediated apoptosis, phosphorylating 'Ser-392' of p53/TP53 following UV irradiation. Phosphorylates a number of DNA repair proteins in response to DNA damage, such as MDC1, MRE11, RAD9A, RAD51 and HTATSF1, promoting their recruitment to DNA damage sites. Can also negatively regulate apoptosis. Phosphorylates the caspases CASP9 and CASP2 and the apoptotic regulator NOL3. Phosphorylation protects CASP9 from cleavage and activation by CASP8, and inhibits the dimerization of CASP2 and activation of CASP8. Phosphorylates YY1, protecting YY1 from cleavage by CASP7 during apoptosis. Regulates transcription by direct phosphorylation of RNA polymerases I, II, III and IV. Also phosphorylates and regulates numerous transcription factors including NF-kappa-B, STAT1, CREB1, IRF1, IRF2, ATF1, ATF4, SRF, MAX, JUN, FOS, MYC and MYB. Phosphorylates Hsp90 and its co-chaperones FKBP4 and CDC37, which is essential for chaperone function. Mediates sequential phosphorylation of FNIP1, promoting its gradual interaction with Hsp90, leading to activate both kinase and non-kinase client proteins of Hsp90. Regulates Wnt signaling by phosphorylating CTNNB1 and the transcription factor LEF1. Acts as an ectokinase that phosphorylates several extracellular proteins. Plays an important role in the circadian clock function by phosphorylating BMAL1 at 'Ser-90' which is pivotal for its interaction with CLOCK and which controls CLOCK nuclear entry. Phosphorylates FMR1, promoting FMR1-dependent formation of a membraneless compartment. May phosphorylate histone H2A on 'Ser-1'. The protein is Casein kinase II subunit alpha (CSNK2A1) of Bos taurus (Bovine).